The following is a 201-amino-acid chain: Ras-related protein Rab-9A (201 aa).

Ala-2 bears the N-acetylalanine mark. Residues Gly-17, Val-18, Gly-19, Lys-20, Ser-21, Ser-22, Asp-33, Ser-34, His-38, and Thr-39 each contribute to the GTP site. Ser-21 lines the Mg(2+) pocket. Residues 31–42 (KFDSQLFHTIGV) carry the Switch 1 motif. The residue at position 34 (Ser-34) is a Phosphoserine. Residues Thr-39 and Asp-62 each coordinate Mg(2+). A Switch 2 motif is present at residues 64 to 78 (AGQERFRSLRTPFYR). GTP is bound by residues Gly-65, Asn-124, Lys-125, Asp-127, Ala-155, and Lys-156. Phosphoserine is present on Ser-179. Thr-187 bears the Phosphothreonine mark. 2 S-geranylgeranyl cysteine lipidation sites follow: Cys-200 and Cys-201.

Belongs to the small GTPase superfamily. Rab family. Interacts (preferentially in its GTP-bound form) with GCC2 (via its GRIP domain). Interacts (GTP-bound form) with SGSM1; the GDP-bound form has much lower affinity for SGSM1. Interacts with SGSM2. The GTP-bound form but not the GDP-bound form interacts with HPS4. The GTP-bound form but not the GDP-bound form interacts with BLOC-3 complex (heterodimer of HPS1 and HPS4) but does not interact with HPS1 alone. Interacts (GTP-bound form) with NDE1; two RAB9A-GTP molecules lie on the opposite sides of the NDE1 homodimer; the interaction leads to RAB9A-dynein motor tethering. Interacts (GTP-bound form) with NDEL1. Mg(2+) is required as a cofactor.

Its subcellular location is the cell membrane. It localises to the endoplasmic reticulum membrane. The protein localises to the golgi apparatus membrane. The protein resides in the late endosome. It is found in the cytoplasmic vesicle. Its subcellular location is the phagosome membrane. It localises to the phagosome. The protein localises to the cytoplasmic vesicle membrane. The protein resides in the melanosome. It catalyses the reaction GTP + H2O = GDP + phosphate + H(+). With respect to regulation, regulated by guanine nucleotide exchange factors (GEFs) which promote the exchange of bound GDP for free GTP. Regulated by GTPase activating proteins (GAPs) which increase the GTP hydrolysis activity. Inhibited by GDP dissociation inhibitors (GDIs). In terms of biological role, the small GTPases Rab are key regulators of intracellular membrane trafficking, from the formation of transport vesicles to their fusion with membranes. Rabs cycle between an inactive GDP-bound form and an active GTP-bound form that is able to recruit to membranes different sets of downstream effectors directly responsible for vesicle formation, movement, tethering and fusion. RAB9A is involved in the transport of proteins between the endosomes and the trans-Golgi network (TGN). Specifically uses NDE1/NDEL1 as an effector to interact with the dynein motor complex in order to control retrograde trafficking of RAB9-associated late endosomes to the TGN. Involved in the recruitment of SGSM2 to melanosomes and is required for the proper trafficking of melanogenic enzymes TYR, TYRP1 and DCT/TYRP2 to melanosomes in melanocytes. The protein is Ras-related protein Rab-9A of Mus musculus (Mouse).